The primary structure comprises 183 residues: Endoribonuclease YbeY (183 aa).

Zn(2+)-binding residues include histidine 140, histidine 144, and histidine 150.

The protein belongs to the endoribonuclease YbeY family. Zn(2+) is required as a cofactor.

It localises to the cytoplasm. Single strand-specific metallo-endoribonuclease involved in late-stage 70S ribosome quality control and in maturation of the 3' terminus of the 16S rRNA. The chain is Endoribonuclease YbeY from Bradyrhizobium diazoefficiens (strain JCM 10833 / BCRC 13528 / IAM 13628 / NBRC 14792 / USDA 110).